The following is a 407-amino-acid chain: Tryptophan synthase beta chain (407 aa).

Lys-91 is modified (N6-(pyridoxal phosphate)lysine).

Belongs to the TrpB family. In terms of assembly, tetramer of two alpha and two beta chains. Requires pyridoxal 5'-phosphate as cofactor.

It carries out the reaction (1S,2R)-1-C-(indol-3-yl)glycerol 3-phosphate + L-serine = D-glyceraldehyde 3-phosphate + L-tryptophan + H2O. It participates in amino-acid biosynthesis; L-tryptophan biosynthesis; L-tryptophan from chorismate: step 5/5. Functionally, the beta subunit is responsible for the synthesis of L-tryptophan from indole and L-serine. This Streptococcus pneumoniae (strain P1031) protein is Tryptophan synthase beta chain.